Here is a 115-residue protein sequence, read N- to C-terminus: NADH-ubiquinone oxidoreductase chain 3 (115 aa).

Transmembrane regions (helical) follow at residues 4-24, 55-75, and 87-107; these read LVALSVNIALSMCLITIAFWL, FFLVAITFLLFDLEIALLLPL, and MMLTSFILVSVLALGLAYEWM.

This sequence belongs to the complex I subunit 3 family. Core subunit of respiratory chain NADH dehydrogenase (Complex I) which is composed of 45 different subunits. Interacts with TMEM186. Interacts with TMEM242.

The protein resides in the mitochondrion inner membrane. It carries out the reaction a ubiquinone + NADH + 5 H(+)(in) = a ubiquinol + NAD(+) + 4 H(+)(out). Its function is as follows. Core subunit of the mitochondrial membrane respiratory chain NADH dehydrogenase (Complex I) which catalyzes electron transfer from NADH through the respiratory chain, using ubiquinone as an electron acceptor. Essential for the catalytic activity of complex I. This is NADH-ubiquinone oxidoreductase chain 3 from Habromys lophurus (Crested-tailed deer mouse).